The primary structure comprises 183 residues: Caspase recruitment domain-containing protein 19 (183 aa).

Cys-7 and Cys-77 are joined by a disulfide. Positions 8 to 99 constitute a CARD domain; it reads DRLVQDTPFL…PLHSCLPSRH (92 aa). The helical transmembrane segment at 122-142 threads the bilayer; sequence GPVAFLTCLGLAAGLALLIYC.

As to quaternary structure, associates with BCL10 by CARD-CARD interaction.

Its subcellular location is the endoplasmic reticulum membrane. The protein localises to the mitochondrion membrane. In terms of biological role, plays a role in inhibiting the effects of BCL10-induced activation of NF-kappa-B. May inhibit the phosphorylation of BCL10 in a CARD-dependent manner. The protein is Caspase recruitment domain-containing protein 19 (CARD19) of Bos taurus (Bovine).